A 633-amino-acid polypeptide reads, in one-letter code: Extracellular metalloproteinase 3 (633 aa).

A signal peptide spans 1–18 (MHGLLLAGLLALPMNVLA). A propeptide spanning residues 19 to 246 (HPAEQHASNV…VHNVVDYVAS (228 aa)) is cleaved from the precursor. Asn410 is a glycosylation site (N-linked (GlcNAc...) asparagine). His429 is a Zn(2+) binding site. Glu430 is an active-site residue. His433 is a Zn(2+) binding site. 2 N-linked (GlcNAc...) asparagine glycosylation sites follow: Asn480 and Asn622.

Belongs to the peptidase M36 family. Zn(2+) is required as a cofactor.

Its subcellular location is the secreted. In terms of biological role, secreted metalloproteinase probably acting as a virulence factor. The sequence is that of Extracellular metalloproteinase 3 (MEP3) from Trichophyton equinum (Horse ringworm fungus).